Consider the following 86-residue polypeptide: Small ribosomal subunit protein bS18 (86 aa).

This sequence belongs to the bacterial ribosomal protein bS18 family. In terms of assembly, part of the 30S ribosomal subunit. Forms a tight heterodimer with protein bS6.

Its function is as follows. Binds as a heterodimer with protein bS6 to the central domain of the 16S rRNA, where it helps stabilize the platform of the 30S subunit. The protein is Small ribosomal subunit protein bS18 of Campylobacter fetus subsp. fetus (strain 82-40).